The sequence spans 495 residues: Ribosome biogenesis protein YTM1 (495 aa).

The ubiquitin-like (UBL) domain stretch occupies residues 15–97; sequence VKVIFTTTEP…ETTLTLQYVR (83 aa). 7 WD repeats span residues 129 to 168, 175 to 213, 223 to 262, 264 to 295, 296 to 337, 386 to 426, and 458 to 495; these read WSSAANSSAAVQPGQERVLSASYDGLLRIWNASGSVIATS, GHTASIKAAKFLTSDRLASAGMDRTVRVWKYTESDHFTG, GHTGSVDWLDVDGHSKHILTASADGAIGFWSASKASAPEP, ASLLPGAHVSKRRKATSSVSTAQRGPLGLWSI, HTAP…STLT, GHAN…PATK, and GDGCKVFSVVWDKLGIFSGGEDKKVQVNRGRNIVTEQK.

It belongs to the WD repeat WDR12/YTM1 family. As to quaternary structure, component of the NOP7 complex, composed of ERB1, NOP7 and YTM1. The complex is held together by ERB1, which interacts with NOP7 via its N-terminal domain and with YTM1 via a high-affinity interaction between the seven-bladed beta-propeller domains of the 2 proteins. The NOP7 complex associates with the 66S pre-ribosome. Interacts (via UBL domain) with MDN1 (via VWFA/MIDAS domain).

It is found in the nucleus. Its subcellular location is the nucleolus. The protein resides in the nucleoplasm. Functionally, component of the NOP7 complex, which is required for maturation of the 25S and 5.8S ribosomal RNAs and formation of the 60S ribosome. This Chaetomium thermophilum (strain DSM 1495 / CBS 144.50 / IMI 039719) (Thermochaetoides thermophila) protein is Ribosome biogenesis protein YTM1.